The sequence spans 96 residues: UPF0235 protein Helmi_20270 (96 aa).

The protein belongs to the UPF0235 family.

The polypeptide is UPF0235 protein Helmi_20270 (Heliobacterium modesticaldum (strain ATCC 51547 / Ice1)).